A 515-amino-acid polypeptide reads, in one-letter code: Protein translocase subunit SecD (515 aa).

6 helical membrane passes run 5–25 (LIAK…LATP), 353–373 (KGIL…VAYY), 375–395 (LSGL…MGLL), 398–418 (FGAT…GIAV), 450–470 (FSTI…LFQF), and 477–497 (GFAV…ILCT).

It belongs to the SecD/SecF family. SecD subfamily. Forms a complex with SecF. Part of the essential Sec protein translocation apparatus which comprises SecA, SecYEG and auxiliary proteins SecDF. Other proteins may also be involved.

It is found in the cell inner membrane. Part of the Sec protein translocase complex. Interacts with the SecYEG preprotein conducting channel. SecDF uses the proton motive force (PMF) to complete protein translocation after the ATP-dependent function of SecA. This is Protein translocase subunit SecD from Desulfurispirillum indicum (strain ATCC BAA-1389 / DSM 22839 / S5).